A 29-amino-acid polypeptide reads, in one-letter code: M-poneritoxin-Ng3d (29 aa).

Expressed by the venom gland.

The protein localises to the secreted. Its function is as follows. Has activity against some Gram-positive bacteria and S.cerevisiae. Has a non-hemolytic activity. This Neoponera goeldii (Ponerine ant) protein is M-poneritoxin-Ng3d.